Reading from the N-terminus, the 195-residue chain is Interferon tau (195 aa).

The signal sequence occupies residues 1 to 23 (MAFMLSLLMALVLVSYGLGGSLG). Disulfide bonds link Cys-52–Cys-162 and Cys-87–Cys-109.

The protein belongs to the alpha/beta interferon family. IFN-alphaII subfamily.

It is found in the secreted. Its function is as follows. Paracrine hormone primarily responsible for maternal recognition of pregnancy. Interacts with endometrial receptors, probably type I interferon receptors, and blocks estrogen receptor expression, preventing the estrogen-induced increase in oxytocin receptor expression in the endometrium. This results in the suppression of the pulsatile endometrial release of the luteolytic hormone prostaglandin F2-alpha, hindering the regression of the corpus luteum (luteolysis) and therefore a return to ovarian cyclicity. This, and a possible direct effect of IFN-tau on prostaglandin synthesis, leads in turn to continued ovarian progesterone secretion, which stimulates the secretion by the endometrium of the nutrients required for the growth of the conceptus. In summary, displays particularly high antiviral and antiproliferative potency concurrently with particular weak cytotoxicity, high antiluteolytic activity and immunomodulatory properties. In contrast with other IFNs, IFN-tau is not virally inducible. This Giraffa camelopardalis (Giraffe) protein is Interferon tau (IFNT).